A 143-amino-acid chain; its full sequence is Lysozyme C (143 aa).

A signal peptide spans 1–15; that stretch reads MRCLLLLLLVPVPGA. The 128-residue stretch at 16-143 folds into the C-type lysozyme domain; the sequence is KVFERCEWAR…LSSYVAGCGV (128 aa). 4 disulfides stabilise this stretch: cysteine 21–cysteine 141, cysteine 45–cysteine 129, cysteine 79–cysteine 94, and cysteine 90–cysteine 108. Active-site residues include glutamate 50 and aspartate 67.

The protein belongs to the glycosyl hydrolase 22 family. Monomer.

The protein localises to the secreted. The catalysed reaction is Hydrolysis of (1-&gt;4)-beta-linkages between N-acetylmuramic acid and N-acetyl-D-glucosamine residues in a peptidoglycan and between N-acetyl-D-glucosamine residues in chitodextrins.. Functionally, lysozymes have primarily a bacteriolytic function; those in tissues and body fluids are associated with the monocyte-macrophage system and enhance the activity of immunoagents. The sequence is that of Lysozyme C (lys) from Scophthalmus maximus (Turbot).